We begin with the raw amino-acid sequence, 1203 residues long: Metabotropic glutamate receptor 5 (1203 aa).

Positions 1-20 (MVLLLILSVLLLKEDVRGSA) are cleaved as a signal peptide. The Extracellular segment spans residues 21–579 (QSSERRVVAH…QYLRWGDPEP (559 aa)). A disulfide bond links cysteine 57 and cysteine 99. Residue tyrosine 64 participates in L-glutamate binding. Residue asparagine 88 is glycosylated (N-linked (GlcNAc...) asparagine). L-glutamate-binding positions include serine 151 and 172–174 (SAT). The N-linked (GlcNAc...) asparagine glycan is linked to asparagine 209. Tyrosine 222 provides a ligand contact to L-glutamate. 8 disulfides stabilise this stretch: cysteine 240/cysteine 529, cysteine 275/cysteine 277, cysteine 364/cysteine 380, cysteine 418/cysteine 425, cysteine 510/cysteine 530, cysteine 514/cysteine 533, cysteine 536/cysteine 548, and cysteine 551/cysteine 564. Position 304 (aspartate 304) interacts with L-glutamate. 2 N-linked (GlcNAc...) asparagine glycosylation sites follow: asparagine 377 and asparagine 381. Lysine 395 provides a ligand contact to L-glutamate. N-linked (GlcNAc...) asparagine glycosylation is present at asparagine 444. A helical transmembrane segment spans residues 580-602 (IAAVVFACLGLLATLFVTVIFII). The Cytoplasmic portion of the chain corresponds to 603–612 (YRDTPVVKSS). The helical transmembrane segment at 613-635 (SRELCYIILAGICLGYLCTFCLI) threads the bilayer. Topologically, residues 636 to 643 (AKPKQIYC) are extracellular. A disulfide bridge connects residues cysteine 643 and cysteine 732. Residues 644–666 (YLQRIGIGLSPAMSYSALVTKTN) traverse the membrane as a helical segment. The Cytoplasmic segment spans residues 667 to 692 (RIARILAGSKKKICTKKPRFMSACAQ). A helical transmembrane segment spans residues 693–713 (LVIAFILICIQLGIIVALFIM). At 714 to 736 (EPPDIMHDYPSIREVYLICNTTN) the chain is on the extracellular side. Asparagine 733 carries an N-linked (GlcNAc...) asparagine glycan. Residues 737 to 758 (LGVVTPLGYNGLLILSCTFYAF) form a helical membrane-spanning segment. The Cytoplasmic segment spans residues 759–771 (KTRNVPANFNEAK). The chain crosses the membrane as a helical span at residues 772-794 (YIAFTMYTTCIIWLAFVPIYFGS). At 795 to 797 (NYK) the chain is on the extracellular side. The chain crosses the membrane as a helical span at residues 798–819 (IITMCFSVSLSATVALGCMFVP). Over 820–1203 (KVYIILAKPE…RDYTQSSSSL (384 aa)) the chain is Cytoplasmic. Phosphoserine is present on serine 860. Arginine 868 bears the Omega-N-methylarginine mark. 3 disordered regions span residues 892 to 970 (FTPK…GSGP), 1003 to 1054 (EESF…GSLM), and 1122 to 1182 (GAQG…ALCI). The span at 905 to 920 (TMSSSNGKSVTWAQNE) shows a compositional bias: polar residues. At arginine 924 the chain carries Omega-N-methylarginine. Over residues 1007–1017 (PAAARPRSPSP) the composition is skewed to low complexity. Serine 1014 and serine 1016 each carry phosphoserine. Composition is skewed to polar residues over residues 1039 to 1054 (HSETAARSSSSQGSLM) and 1165 to 1176 (DSGSTTPNSPVS).

Belongs to the G-protein coupled receptor 3 family. Interacts with RYR1, RYR2, ITPR1, SHANK1 and SHANK3. The PPXXF motif binds HOMER1, HOMER2 and HOMER3. Interacts with SIAH1 and TAMALIN. Interacts with NCDN. Interacts with NECAB2. Interacts with CAMK2A. In terms of tissue distribution, widely distributed in neuronal cells of the central nervous system.

The protein localises to the cell membrane. Its function is as follows. G-protein coupled receptor for glutamate. Ligand binding causes a conformation change that triggers signaling via guanine nucleotide-binding proteins (G proteins) and modulates the activity of down-stream effectors. Signaling activates a phosphatidylinositol-calcium second messenger system and generates a calcium-activated chloride current. Plays an important role in the regulation of synaptic plasticity and the modulation of the neural network activity. The protein is Metabotropic glutamate receptor 5 (Grm5) of Rattus norvegicus (Rat).